The chain runs to 94 residues: Small ribosomal subunit protein bS18 (94 aa).

Belongs to the bacterial ribosomal protein bS18 family. Part of the 30S ribosomal subunit. Forms a tight heterodimer with protein bS6.

Functionally, binds as a heterodimer with protein bS6 to the central domain of the 16S rRNA, where it helps stabilize the platform of the 30S subunit. This Acetivibrio thermocellus (strain ATCC 27405 / DSM 1237 / JCM 9322 / NBRC 103400 / NCIMB 10682 / NRRL B-4536 / VPI 7372) (Clostridium thermocellum) protein is Small ribosomal subunit protein bS18.